A 1365-amino-acid chain; its full sequence is MSENEVVGSPTTNGDKNEDGYPAENGEGTNVDDNNNEEEKDGIPLDNDNDENDSSEESATDEEAERQVREGFIVEDEEDEVPQEIRRKKKRKKHAESTADQDMLDEEDLELVMENTGQGSRFSKLRRLKRGRDQEETLENIFSEEEEEEENEVDDEAPNRTQGHRAGVIDEFADFIEQDEFEDEERQEEKYETGPPIESVRPEALGISDDDYIQIYEVFGDGTDYAFALEDEDAEDELEESVSLKTIFEPSELKDKMLTEEDEIIRITDEPERMQLYMKRNIDCSEDEFREQVAWIIDYLLKNRRDIDAELYEPFQTAVRYVVHFFIRDSLEVPFIWQHRRDYIVHNNRERNTITPLLSQNDLWNIFFLCTKFWSLHSKKQDILKLYSDLGINDDLVVPFCEAASSLDAIDDLNDYIHFTYSEQIRDRALLMGTGLRRPQGSKYSFFEKFRKSSLYNLVKEFGMSAKDFSFNVAQGARLRFVEDNTLSPEELSRTYVTNELSSPEQVLQKARRVLAEEIIHDPQFRKSFRDKLYNAGVVTVLATQKGVRKIGSEHPYYEFKYLKRKPLGSFELEPILFLKMLKAEEEGLIQLSIEFEDPDDVFKGLLELFVSDNFSENAMQWNAQRELVLKEVFKRFSALAPDAIRETLRSRYLDELGMRCRNQLFSRLDQAPYEPSTKNFDRGTIPSVLAVSNGKGESSDAIICVFVDDVGEPTDSLKLADLRDLANQAMFAEFVEKVKPDVIGVSGMSVSAHKIRQHVQDSLTSHEPVDLIMVNDEVARLYQNSTRAVDEFPTLPTISCYCVALARYVQNPLFEYAAMGRDLMSLSFDPWQHLLPPDVLWKYLETALVDISSLVGIDINEAVTNKYEANILPYIAGLGPRKADYVLKKIAATGGRIDNRSDLISKQIMSRKVFINCSSFFIIPNDEYPNMDILDSTRIHNEDYELARKMASDALELDEEDIEELETNRGVVYHLLEENETGKLDELVLEEYADQLEREFHQKKRNTLEKIRLELKDPYGEQRNVFHKLTPSEIFLMLTGENPEELQADAIVPVNVRRVTNRFVAVKLDCGIDGNIKADEVSDDFIPPPQLLQVGQTVEGVIISLDEANFMVDLSLRNSVLQSANSKRQTSSHRTSYWDTEAEKRDTERMQAETQAEQRVARVIKHPLFKDLNASQAEAYLSKMQVGDLVIRPSSKGSDHIVVTWKVAEGSYQHIDVLELEKENEFTIGQKLLVKGRFEKMTYQYSDLDELIVLHIKAIAKKIDEMCIHDKFRKGTQAETEKWLESYSEANPKRSCYAFCFDHQHPGYFILCFKASVNSPVTAWPVKVIPNAFFLQGNVYGDMTALCNGFKLLYAARTKNFRRM.

Over residues 1-14 (MSENEVVGSPTTNG) the composition is skewed to polar residues. Disordered stretches follow at residues 1-165 (MSEN…QGHR) and 181-202 (FEDE…SVRP). Residues 24-33 (ENGEGTNVDD) are compositionally biased toward low complexity. 4 stretches are compositionally biased toward acidic residues: residues 47-64 (NDND…DEEA), 73-82 (IVEDEEDEVP), 102-111 (DMLDEEDLEL), and 136-156 (ETLE…VDDE). Position 137 is a phosphothreonine (Thr137). Ser143 carries the phosphoserine modification. Ser454 is subject to Phosphoserine. Residues 1050–1118 (DAIVPVNVRR…ANFMVDLSLR (69 aa)) form the S1 motif domain. A compositionally biased stretch (polar residues) spans 1124–1139 (SANSKRQTSSHRTSYW). The interval 1124–1146 (SANSKRQTSSHRTSYWDTEAEKR) is disordered. Residues 1167–1262 (HPLFKDLNAS…IVLHIKAIAK (96 aa)) enclose the SH2 domain.

The protein belongs to the SPT6 family.

It is found in the nucleus. Its subcellular location is the chromosome. Functionally, histone H3-H4 chaperone that plays a role in maintenance of chromatin structure during RNA polymerase II transcription elongation thereby repressing transcription initiation from cryptic promoters. Mediates the reassembly of nucleosomes onto the promoters of at least a selected set of genes during repression; the nucleosome reassembly is essential for transcriptional repression. This Schizosaccharomyces pombe (strain 972 / ATCC 24843) (Fission yeast) protein is Transcription elongation factor spt6 (spt6).